The primary structure comprises 279 residues: BEN domain-containing protein 6 (279 aa).

Residues 1–15 (MQKIVQTDEITNTQA) show a composition bias toward polar residues. Disordered stretches follow at residues 1-65 (MQKI…LAEL) and 134-172 (RATN…TDEK). Residues 62-99 (LAELSKEELCAKIKSLKEKLTNTRKENSRLRQSLVMLQ) are a coiled coil. Polar residues predominate over residues 134 to 148 (RATNNSSPDSFASTC). A compositionally biased stretch (basic and acidic residues) spans 162–172 (KPEEEHQTDEK). The BEN domain maps to 171 to 271 (EKQFQIEKWQ…NCTKKPNLSK (101 aa)).

As to quaternary structure, interacts (via BEN domain) with RBPJ.

The protein localises to the nucleus. In terms of biological role, acts as a corepressor of recombining binding protein suppressor hairless (RBPJ) and inhibits Notch signaling in neural stem cells, thereby opposing their self-renewal and promoting neurogenesis. The protein is BEN domain-containing protein 6 (BEND6) of Homo sapiens (Human).